A 679-amino-acid polypeptide reads, in one-letter code: MSAQNGMYYSLLEWFKTLNLNAPHANAEELSDGVALAQALNQFAPESFTNSWLSKIKSSAVGSNWRLRMSNLKKVVEGVYEYYSDVLNYTLQPDFAKPDVQAIAEKCDLTELERLLQLVLGCAVNCAKKQSYICEIMCLEEELQANIMRALQDLESSTRQSVEGGGVVSSMSRNSLSNMLEGNTKAQEERDAMAQKCFETEKKMLLLIDEKNNLQQELQKIQQEFARLELNTIGDDGVSLGPIQAGSVRYNELRRQLELVKEELLQSEGAREDLKIKAQQQEADILHMQQRIDELMKTTAELTSLKDEVDVLRESTEKLKVCEAQLETYKKKLEEYNDLKKHVKMLEERSADYVQQNAQFEEDAKRYANTKGQIELFKKEIQDLHTKLDNESSKNVKLEFDNKNLESKALALQREKDSLLKERDNLREAFDELKCGQLSTNSGSLTGNTVSRELQPAAMVDKIQRLEAENKALREGQGGQTALAQLLDDANKRCEHLREQIKAANERILSLTHASQSDDPILKENELSKQIKQLMELNEQKTLQIEESSTQNSAMQCKITQLESTLSTREQELMAYEVKYRKCVEKAKEVIKTIDPRIASGLEANILEKSIDVIEEESKTKMSTMEEQLMTSAYYRLGVNAHRDAVESKLALLMGSGQTFLARQRQSAPRKSLTTMKSK.

The Calponin-homology (CH) domain occupies 5 to 123 (NGMYYSLLEW…RLLQLVLGCA (119 aa)). The stretch at 140–627 (EEELQANIMR…SKTKMSTMEE (488 aa)) forms a coiled coil.

This sequence belongs to the hook family. In terms of assembly, homodimer. Interacts with microtubules via its N-terminus.

Its subcellular location is the cytoplasm. The protein localises to the cytoskeleton. It localises to the endosome. It is found in the synapse. Involved in endocytic trafficking by stabilizing organelles of the endocytic pathway. Probably acts as a cytoskeletal linker protein required to tether endosome vesicles to the cytoskeleton. Involved in modulation of endocytosis at stages required for down-regulation of membrane proteins that control synapse size. Not involved in synaptic vesicle recycling. Required in R7 cells for boss endocytosis into multivesicular bodies (MVBs). Has a role in regulating adult longevity. The protein is Protein hook of Drosophila mojavensis (Fruit fly).